A 172-amino-acid chain; its full sequence is uncharacterized protein (172 aa).

This is an uncharacterized protein from Haemophilus influenzae (strain ATCC 51907 / DSM 11121 / KW20 / Rd).